Here is a 239-residue protein sequence, read N- to C-terminus: Phosphoribosylaminoimidazole-succinocarboxamide synthase (239 aa).

It belongs to the SAICAR synthetase family.

It catalyses the reaction 5-amino-1-(5-phospho-D-ribosyl)imidazole-4-carboxylate + L-aspartate + ATP = (2S)-2-[5-amino-1-(5-phospho-beta-D-ribosyl)imidazole-4-carboxamido]succinate + ADP + phosphate + 2 H(+). It functions in the pathway purine metabolism; IMP biosynthesis via de novo pathway; 5-amino-1-(5-phospho-D-ribosyl)imidazole-4-carboxamide from 5-amino-1-(5-phospho-D-ribosyl)imidazole-4-carboxylate: step 1/2. This Brevibacillus brevis (strain 47 / JCM 6285 / NBRC 100599) protein is Phosphoribosylaminoimidazole-succinocarboxamide synthase.